The sequence spans 418 residues: Thermolabile hemolysin (418 aa).

The signal sequence occupies residues 1 to 19 (MMKKTITLLTALLPLASAV). Ser153 (nucleophile) is an active-site residue. Residues Asp390 and His393 contribute to the active site.

Belongs to the 'GDSL' lipolytic enzyme family. Post-translationally, there are two forms of LDH. The LDH(S) may be a protein in which 13 residues of the N-terminal of LDH(L) are deleted.

The protein resides in the secreted. Phospholipase hydrolyzing both fatty acid esters of phospholipid, i.e. it hydrolyzes phosphatidylcholine (PC) to lysophosphatidylcholine (LPC) and then LPC to glycerophosphorylcholine (GPC). The protein is Thermolabile hemolysin of Vibrio parahaemolyticus serotype O3:K6 (strain RIMD 2210633).